We begin with the raw amino-acid sequence, 37 residues long: Large ribosomal subunit protein bL36 (37 aa).

This sequence belongs to the bacterial ribosomal protein bL36 family.

This chain is Large ribosomal subunit protein bL36, found in Cyanothece sp. (strain PCC 7425 / ATCC 29141).